Here is a 427-residue protein sequence, read N- to C-terminus: Glutamyl-tRNA reductase (427 aa).

Substrate-binding positions include T49–R52, S101, E106–Q108, and Q112. Catalysis depends on C50, which acts as the Nucleophile. An NADP(+)-binding site is contributed by G181–I186. A disordered region spans residues F407–P427. Positions V418–P427 are enriched in basic and acidic residues.

Belongs to the glutamyl-tRNA reductase family. In terms of assembly, homodimer.

The catalysed reaction is (S)-4-amino-5-oxopentanoate + tRNA(Glu) + NADP(+) = L-glutamyl-tRNA(Glu) + NADPH + H(+). Its pathway is porphyrin-containing compound metabolism; protoporphyrin-IX biosynthesis; 5-aminolevulinate from L-glutamyl-tRNA(Glu): step 1/2. Its function is as follows. Catalyzes the NADPH-dependent reduction of glutamyl-tRNA(Glu) to glutamate 1-semialdehyde (GSA). The protein is Glutamyl-tRNA reductase of Stenotrophomonas maltophilia (strain K279a).